The chain runs to 353 residues: Phosphate acyltransferase (353 aa).

Belongs to the PlsX family. Homodimer. Probably interacts with PlsY.

The protein localises to the cytoplasm. The catalysed reaction is a fatty acyl-[ACP] + phosphate = an acyl phosphate + holo-[ACP]. It functions in the pathway lipid metabolism; phospholipid metabolism. In terms of biological role, catalyzes the reversible formation of acyl-phosphate (acyl-PO(4)) from acyl-[acyl-carrier-protein] (acyl-ACP). This enzyme utilizes acyl-ACP as fatty acyl donor, but not acyl-CoA. This Afipia carboxidovorans (strain ATCC 49405 / DSM 1227 / KCTC 32145 / OM5) (Oligotropha carboxidovorans) protein is Phosphate acyltransferase.